The primary structure comprises 192 residues: UPF0149 protein VP2588 (192 aa).

The protein belongs to the UPF0149 family.

This chain is UPF0149 protein VP2588, found in Vibrio parahaemolyticus serotype O3:K6 (strain RIMD 2210633).